Reading from the N-terminus, the 150-residue chain is Avidin-related protein 3 (150 aa).

An N-terminal signal peptide occupies residues 1-24 (MVHTTSPLLLLLLLSLALVAPSLS). The region spanning 26–147 (RKCSLTGKWT…GYNNFTRQRT (122 aa)) is the Avidin-like domain. A disulfide bridge links Cys-28 with Cys-105. Positions 36, 40, 57, 59, and 63 each coordinate biotin. Asn-93 is a glycosylation site (N-linked (GlcNAc...) asparagine). Biotin is bound by residues Ser-95, Ser-99, and Asn-140. Asn-141 carries an N-linked (GlcNAc...) asparagine glycan.

This sequence belongs to the avidin/streptavidin family. In terms of assembly, homotetramer. Glycosylated.

The protein localises to the secreted. In terms of biological role, forms a strong non-covalent specific complex with biotin. This is Avidin-related protein 3 (AVR3) from Gallus gallus (Chicken).